A 267-amino-acid polypeptide reads, in one-letter code: Hydroxyethylthiazole kinase (267 aa).

Residue Met-48 participates in substrate binding. Residues Arg-124 and Ser-170 each coordinate ATP. Gly-197 contributes to the substrate binding site.

This sequence belongs to the Thz kinase family. Mg(2+) serves as cofactor.

The enzyme catalyses 5-(2-hydroxyethyl)-4-methylthiazole + ATP = 4-methyl-5-(2-phosphooxyethyl)-thiazole + ADP + H(+). It participates in cofactor biosynthesis; thiamine diphosphate biosynthesis; 4-methyl-5-(2-phosphoethyl)-thiazole from 5-(2-hydroxyethyl)-4-methylthiazole: step 1/1. Functionally, catalyzes the phosphorylation of the hydroxyl group of 4-methyl-5-beta-hydroxyethylthiazole (THZ). This is Hydroxyethylthiazole kinase from Leptospira biflexa serovar Patoc (strain Patoc 1 / Ames).